Here is a 169-residue protein sequence, read N- to C-terminus: Methane monooxygenase component A gamma chain (169 aa).

M.trichosporium has two forms of methane monooxygenase, a soluble and a membrane-bound type. The soluble type consists of four components (A to D): protein A, comprising three chains, in an alpha-2, beta-2, gamma-2 configuration, is a nonheme iron protein containing an unusual mu-hydroxo bridge structure at its active site and interacts with both oxygen and methane.

The enzyme catalyses methane + NADH + O2 + H(+) = methanol + NAD(+) + H2O. The catalysed reaction is methane + NADPH + O2 + H(+) = methanol + NADP(+) + H2O. Responsible for the initial oxygenation of methane to methanol in methanotrophs. It also catalyzes the monohydroxylation of a variety of unactivated alkenes, alicyclic, aromatic and heterocyclic compounds. In Methylosinus trichosporium, this protein is Methane monooxygenase component A gamma chain (mmoZ).